Here is a 280-residue protein sequence, read N- to C-terminus: Elongation factor Ts (280 aa).

Positions 79–82 are involved in Mg(2+) ion dislocation from EF-Tu; that stretch reads TDFV.

Belongs to the EF-Ts family.

It is found in the cytoplasm. In terms of biological role, associates with the EF-Tu.GDP complex and induces the exchange of GDP to GTP. It remains bound to the aminoacyl-tRNA.EF-Tu.GTP complex up to the GTP hydrolysis stage on the ribosome. The protein is Elongation factor Ts of Treponema denticola (strain ATCC 35405 / DSM 14222 / CIP 103919 / JCM 8153 / KCTC 15104).